Here is a 75-residue protein sequence, read N- to C-terminus: Ribonuclease pancreatic (75 aa).

Cystine bridges form between cysteine 7–cysteine 65 and cysteine 46–cysteine 53. Asparagine 15 carries N-linked (GlcNAc...) asparagine glycosylation. Substrate contacts are provided by residues 22-26, lysine 47, and arginine 66; that span reads KPVNT.

It belongs to the pancreatic ribonuclease family. As to quaternary structure, monomer. Interacts with and forms tight 1:1 complexes with RNH1. Dimerization of two such complexes may occur. Interaction with RNH1 inhibits this protein. Pancreas.

Its subcellular location is the secreted. The catalysed reaction is an [RNA] containing cytidine + H2O = an [RNA]-3'-cytidine-3'-phosphate + a 5'-hydroxy-ribonucleotide-3'-[RNA].. The enzyme catalyses an [RNA] containing uridine + H2O = an [RNA]-3'-uridine-3'-phosphate + a 5'-hydroxy-ribonucleotide-3'-[RNA].. In terms of biological role, endonuclease that catalyzes the cleavage of RNA on the 3' side of pyrimidine nucleotides. Acts on single-stranded and double-stranded RNA. This Oryx leucoryx (Arabian oryx) protein is Ribonuclease pancreatic (rnase1).